Reading from the N-terminus, the 281-residue chain is NADPH-dependent 7-cyano-7-deazaguanine reductase (281 aa).

Residue 86-88 (IES) participates in substrate binding. Residue 88-89 (SK) coordinates NADPH. The active-site Thioimide intermediate is the Cys-189. Catalysis depends on Asp-196, which acts as the Proton donor. Substrate is bound at residue 228–229 (HE). 257-258 (RG) contacts NADPH.

It belongs to the GTP cyclohydrolase I family. QueF type 2 subfamily. Homodimer.

The protein resides in the cytoplasm. It catalyses the reaction 7-aminomethyl-7-carbaguanine + 2 NADP(+) = 7-cyano-7-deazaguanine + 2 NADPH + 3 H(+). Its pathway is tRNA modification; tRNA-queuosine biosynthesis. Catalyzes the NADPH-dependent reduction of 7-cyano-7-deazaguanine (preQ0) to 7-aminomethyl-7-deazaguanine (preQ1). This is NADPH-dependent 7-cyano-7-deazaguanine reductase from Mannheimia succiniciproducens (strain KCTC 0769BP / MBEL55E).